Consider the following 661-residue polypeptide: uncharacterized protein (661 aa).

16 helical membrane-spanning segments follow: residues 27–47, 68–88, 116–136, 150–170, 179–199, 214–234, 251–271, 279–299, 313–333, 369–389, 396–416, 435–455, 488–508, 519–539, 552–572, and 599–619; these read LAIG…VSGA, VGFF…IHVV, LWLG…TGVG, VAAS…LVVA, WLGH…TAVT, AAIV…AAAL, GALA…GWAV, GLLA…RLLV, GAAL…VMTA, SLIG…FAAL, WPVG…FTSG, MTLN…TLAL, PITA…TPLF, EFMA…IIGI, IGLL…LMTM, and GGGI…VALV.

To M.leprae ML1998.

Its subcellular location is the cell membrane. This is an uncharacterized protein from Mycobacterium tuberculosis (strain CDC 1551 / Oshkosh).